Reading from the N-terminus, the 190-residue chain is Glutamyl-tRNA(Gln) amidotransferase subunit F, mitochondrial (190 aa).

It belongs to the GatF family. Subunit of the heterotrimeric GatFAB amidotransferase (AdT) complex, composed of A, B and F subunits.

Its subcellular location is the mitochondrion inner membrane. It catalyses the reaction L-glutamyl-tRNA(Gln) + L-glutamine + ATP + H2O = L-glutaminyl-tRNA(Gln) + L-glutamate + ADP + phosphate + H(+). In terms of biological role, allows the formation of correctly charged Gln-tRNA(Gln) through the transamidation of misacylated Glu-tRNA(Gln) in the mitochondria. The reaction takes place in the presence of glutamine and ATP through an activated gamma-phospho-Glu-tRNA(Gln). Required for proper protein synthesis within the mitochondrion. The chain is Glutamyl-tRNA(Gln) amidotransferase subunit F, mitochondrial from Eremothecium gossypii (strain ATCC 10895 / CBS 109.51 / FGSC 9923 / NRRL Y-1056) (Yeast).